A 208-amino-acid polypeptide reads, in one-letter code: Cysteine-rich protein 2 (208 aa).

Residues 5 to 57 (CPKCDKTVYFAEKVSSLGKDWHKFCLKCERCNKTLTPGGHAEHDGKPFCHKPC) form the LIM zinc-binding 1 domain. Lys23 carries the N6-acetyllysine modification. The residue at position 104 (Ser104) is a Phosphoserine. The region spanning 126 to 178 (CPRCNKRVYFAEKVTSLGKDWHRPCLRCERCSKTLTPGGHAEHDGQPYCHKPC) is the LIM zinc-binding 2 domain. N6-acetyllysine is present on residues Lys138 and Lys144.

In terms of assembly, interacts with TGFB1I1.

This chain is Cysteine-rich protein 2 (Crip2), found in Mus musculus (Mouse).